Consider the following 347-residue polypeptide: MVQYVVEWLPRIQSISVVVEGWKQVEIKNLKDTLMSISGDEEQVEDILLPVEVEEKVDASYKFKNRGKDLEWMTKLRSKSSKIYDSSIMSLPDGRWTKEELRSDSDFSIECLNCKQKIISKDNCQVLNDMPSEFWFELMDYWHCHKPDVKEDKSSYTRFETLKPSKNEILIGSSYFQGTPATFENVATTKENDNVLCIKCSAVLGQVTAGSLYKLHKWKLQLIRSGNTYKFPPECDITISLINVVKANSCRYVLVKCKTESLLVWIFSVDIGVTLTGNKSFKRAMKLLYTNSVTTINRCLNRQVVEELDFQETSFNAFYSALQHTNALLPSSMKKIGEWTISYTSLI.

This is an uncharacterized protein from Saccharomyces cerevisiae (strain ATCC 204508 / S288c) (Baker's yeast).